The primary structure comprises 656 residues: UvrABC system protein B (656 aa).

Residues 24–409 (QGVRNRTPSQ…QGHIVEQILR (386 aa)) enclose the Helicase ATP-binding domain. An ATP-binding site is contributed by 37-44 (GTTGSGKT). Residues 90 to 113 (YYDYYQPEAYIARNDTYIEKSLLI) carry the Beta-hairpin motif. The 164-residue stretch at 426–589 (QVDDLLEEIR…ITPKPIIKAI (164 aa)) folds into the Helicase C-terminal domain. Positions 616–651 (EKLIKKYENLMLQAANAFRFDEAAQYRDKMKAAKEQ) constitute a UVR domain.

Belongs to the UvrB family. Forms a heterotetramer with UvrA during the search for lesions. Interacts with UvrC in an incision complex.

It is found in the cytoplasm. The UvrABC repair system catalyzes the recognition and processing of DNA lesions. A damage recognition complex composed of 2 UvrA and 2 UvrB subunits scans DNA for abnormalities. Upon binding of the UvrA(2)B(2) complex to a putative damaged site, the DNA wraps around one UvrB monomer. DNA wrap is dependent on ATP binding by UvrB and probably causes local melting of the DNA helix, facilitating insertion of UvrB beta-hairpin between the DNA strands. Then UvrB probes one DNA strand for the presence of a lesion. If a lesion is found the UvrA subunits dissociate and the UvrB-DNA preincision complex is formed. This complex is subsequently bound by UvrC and the second UvrB is released. If no lesion is found, the DNA wraps around the other UvrB subunit that will check the other stand for damage. The sequence is that of UvrABC system protein B from Chlamydia abortus (strain DSM 27085 / S26/3) (Chlamydophila abortus).